We begin with the raw amino-acid sequence, 234 residues long: Demethylmenaquinone methyltransferase (234 aa).

Residues Thr-58, Asp-79, and 106-107 (NA) contribute to the S-adenosyl-L-methionine site.

It belongs to the class I-like SAM-binding methyltransferase superfamily. MenG/UbiE family.

It catalyses the reaction a 2-demethylmenaquinol + S-adenosyl-L-methionine = a menaquinol + S-adenosyl-L-homocysteine + H(+). The protein operates within quinol/quinone metabolism; menaquinone biosynthesis; menaquinol from 1,4-dihydroxy-2-naphthoate: step 2/2. Its function is as follows. Methyltransferase required for the conversion of demethylmenaquinol (DMKH2) to menaquinol (MKH2). This Geobacillus sp. (strain WCH70) protein is Demethylmenaquinone methyltransferase.